The primary structure comprises 599 residues: Crinkler effector protein 8 (599 aa).

The N-terminal stretch at M1–P17 is a signal peptide. The interval V18–K52 is LQLFLAK domain. N-linked (GlcNAc...) asparagine glycosylation occurs at N23. A DWL domain region spans residues A53 to I109. The HVLVXXP motif motif lies at H110–P116. Residues P117–K590 are C-terminal D2 effector domain. Residues S249, S281, and S385 each carry the phosphoserine modification. A Protein kinase domain is found at L289–K590. The Proton acceptor role is filled by D470. A phosphoserine mark is found at S474 and S587. The disordered stretch occupies residues R577–A599. The short motif at K590 to A599 is the Host nuclear localization signal element.

The protein in the N-terminal section; belongs to the Crinkler effector family. It in the C-terminal section; belongs to the protein kinase superfamily. Dimerizes in host plants. In terms of processing, autophosphorylated at Ser-249, Ser-281, Ser-385, Ser-474 and Ser-587. Additional serines or threonines are also targeted for phosphorylation.

The protein localises to the secreted. Its subcellular location is the host nucleus. The catalysed reaction is L-seryl-[protein] + ATP = O-phospho-L-seryl-[protein] + ADP + H(+). The enzyme catalyses L-threonyl-[protein] + ATP = O-phospho-L-threonyl-[protein] + ADP + H(+). Functionally, secreted effector that induces cell death when expressed in host plants. Acts as a kinase and is able to autophosphorylate, however its cell death inducing ability is not a direct result of its kinase activity, but rather a consequence of the phosphorylated state of the five identified serine residues in the CRN8 protein. This Phytophthora infestans (Potato late blight agent) protein is Crinkler effector protein 8.